We begin with the raw amino-acid sequence, 428 residues long: MTWFIDRRLNGKNKSTVNRQRFLRRYKAQIKQSISEAINKRSVTDVDSGESVSIPTDDISEPMFHQGRGGLRHRVHPGNDHFIQNDRIERPQGGGGGGSGSGQGQASQDGEGQDEFVFQISKDEYLDLLFEDLALPNLKKNQHRQLNEYKTHRAGFTSNGVPANISVVRSLQNSLARRTAMTAGKRRELHALETELETISHSEPAQLLEEERLRREIAELRAKIERVPFIDTFDLRYKNYEKRPEPSSQAVMFCLMDVSGSMDQATKDMAKRFYILLYLFLSRTYKNVEVVYIRHHTQAKEVDEHEFFYSQETGGTIVSSALKLMDEVVKERYDPGQWNIYAAQASDGDNWADDSPLCHEILAKKLLPVVRYYSYIEITRRAHQTLWREYEHLQATFDNFAMQHIRDQEDIYPVFRELFQKQSANQSV.

Basic and acidic residues predominate over residues 78–90 (GNDHFIQNDRIER). A disordered region spans residues 78-111 (GNDHFIQNDRIERPQGGGGGGSGSGQGQASQDGE). Gly residues predominate over residues 92-103 (QGGGGGGSGSGQ).

It belongs to the UPF0229 family.

The sequence is that of UPF0229 protein YeaH from Salmonella enteritidis PT4 (strain P125109).